Here is a 248-residue protein sequence, read N- to C-terminus: tRNA (guanine-N(1)-)-methyltransferase (248 aa).

Residues Gly-113 and 133-138 (VGDYVL) contribute to the S-adenosyl-L-methionine site.

This sequence belongs to the RNA methyltransferase TrmD family. Homodimer.

It is found in the cytoplasm. The catalysed reaction is guanosine(37) in tRNA + S-adenosyl-L-methionine = N(1)-methylguanosine(37) in tRNA + S-adenosyl-L-homocysteine + H(+). Specifically methylates guanosine-37 in various tRNAs. This is tRNA (guanine-N(1)-)-methyltransferase from Shewanella sp. (strain ANA-3).